A 156-amino-acid polypeptide reads, in one-letter code: Small ribosomal subunit protein uS7c (156 aa).

The protein belongs to the universal ribosomal protein uS7 family. In terms of assembly, part of the 30S ribosomal subunit.

It localises to the plastid. The protein resides in the chloroplast. Functionally, one of the primary rRNA binding proteins, it binds directly to 16S rRNA where it nucleates assembly of the head domain of the 30S subunit. This is Small ribosomal subunit protein uS7c (rps7) from Zamia furfuracea (Cardboard cycad).